The following is a 274-amino-acid chain: Putative pyruvate, phosphate dikinase regulatory protein 1 (274 aa).

149 to 156 (GISRTSKT) contacts ADP.

It belongs to the pyruvate, phosphate/water dikinase regulatory protein family. PDRP subfamily.

It catalyses the reaction N(tele)-phospho-L-histidyl/L-threonyl-[pyruvate, phosphate dikinase] + ADP = N(tele)-phospho-L-histidyl/O-phospho-L-threonyl-[pyruvate, phosphate dikinase] + AMP + H(+). It carries out the reaction N(tele)-phospho-L-histidyl/O-phospho-L-threonyl-[pyruvate, phosphate dikinase] + phosphate + H(+) = N(tele)-phospho-L-histidyl/L-threonyl-[pyruvate, phosphate dikinase] + diphosphate. Its function is as follows. Bifunctional serine/threonine kinase and phosphorylase involved in the regulation of the pyruvate, phosphate dikinase (PPDK) by catalyzing its phosphorylation/dephosphorylation. In Listeria welshimeri serovar 6b (strain ATCC 35897 / DSM 20650 / CCUG 15529 / CIP 8149 / NCTC 11857 / SLCC 5334 / V8), this protein is Putative pyruvate, phosphate dikinase regulatory protein 1.